A 521-amino-acid chain; its full sequence is Cytoplasmic polyadenylation element-binding protein 2 (521 aa).

Positions 1–11 (MNLPQQQPPAA) are enriched in pro residues. Disordered regions lie at residues 1–35 (MNLP…QAAA) and 50–88 (PLLK…NMGI). Residues 12 to 35 (APQQPQSRRSPVSPQLQQQHQAAA) are compositionally biased toward low complexity. Ser-21 bears the Phosphoserine mark. Positions 55 to 70 (SPWSNHQNSGWGTASM) are enriched in polar residues. RRM domains lie at 264 to 355 (RKVF…PWNL) and 372 to 454 (KTIF…PYVL).

This sequence belongs to the RRM CPEB family. As to quaternary structure, interacts with TENT2/GLD2. In terms of tissue distribution, expressed in embryo, cerebellum, salivary gland, thymus, heart, liver, lung, spleen, kidney, intestine, ovary and round spermatids. Weakly expressed in granular cells of dentate gyrus and the pyramidal cells of CA3 and CA1 of the hippocampus.

Its subcellular location is the cytoplasm. Functionally, may play a role in translational regulation of stored mRNAs in transcriptionally inactive haploid spermatids. Binds to poly(U) RNA oligomers. Required for cell cycle progression, specifically for the transition from metaphase to anaphase. The polypeptide is Cytoplasmic polyadenylation element-binding protein 2 (Cpeb2) (Mus musculus (Mouse)).